Here is a 339-residue protein sequence, read N- to C-terminus: Ketol-acid reductoisomerase (NADP(+)) (339 aa).

Positions 1-182 (MRVYYDRDAD…GGGRSGIIET (182 aa)) constitute a KARI N-terminal Rossmann domain. NADP(+) contacts are provided by residues 24-27 (YGSQ), Lys-48, Ser-51, Thr-53, and 83-86 (DELQ). His-108 is an active-site residue. Gly-134 serves as a coordination point for NADP(+). In terms of domain architecture, KARI C-terminal knotted spans 183–328 (NFKEECETDL…AKLRAMMPWI (146 aa)). 4 residues coordinate Mg(2+): Asp-191, Glu-195, Glu-227, and Glu-231. Ser-252 serves as a coordination point for substrate.

The protein belongs to the ketol-acid reductoisomerase family. The cofactor is Mg(2+).

It catalyses the reaction (2R)-2,3-dihydroxy-3-methylbutanoate + NADP(+) = (2S)-2-acetolactate + NADPH + H(+). The catalysed reaction is (2R,3R)-2,3-dihydroxy-3-methylpentanoate + NADP(+) = (S)-2-ethyl-2-hydroxy-3-oxobutanoate + NADPH + H(+). It participates in amino-acid biosynthesis; L-isoleucine biosynthesis; L-isoleucine from 2-oxobutanoate: step 2/4. Its pathway is amino-acid biosynthesis; L-valine biosynthesis; L-valine from pyruvate: step 2/4. Involved in the biosynthesis of branched-chain amino acids (BCAA). Catalyzes an alkyl-migration followed by a ketol-acid reduction of (S)-2-acetolactate (S2AL) to yield (R)-2,3-dihydroxy-isovalerate. In the isomerase reaction, S2AL is rearranged via a Mg-dependent methyl migration to produce 3-hydroxy-3-methyl-2-ketobutyrate (HMKB). In the reductase reaction, this 2-ketoacid undergoes a metal-dependent reduction by NADPH to yield (R)-2,3-dihydroxy-isovalerate. This Rhizobium meliloti (strain 1021) (Ensifer meliloti) protein is Ketol-acid reductoisomerase (NADP(+)).